Here is an 88-residue protein sequence, read N- to C-terminus: Large ribosomal subunit protein bL31B (88 aa).

Belongs to the bacterial ribosomal protein bL31 family. Type B subfamily. In terms of assembly, part of the 50S ribosomal subunit.

The sequence is that of Large ribosomal subunit protein bL31B from Burkholderia orbicola (strain MC0-3).